A 394-amino-acid polypeptide reads, in one-letter code: MLDPFSEKAKELLKGFGSINDFMDAIPKIVSVDDVIERIRVVKNEKLIDKFLDQDNVMDLAQFYALLGALSYSPYGIELELVKKANLIIYSERLKRKKEIKPEEISIDVSTAIEFPTEDVRKIERVYGKIPEYTMKISDFLDLVPDEKLANYYIYEGRVYLKREDLIRIWSKAFERNVERGVNMLYEIRDELPEFYRKVLGEIQAFAEEEFGRKFGEIQGGKLRPEFFPPCIKNALKGVPQGIRNYAITVLLTSFLSYARICPNPPRRNVRVKDCIKDIRVITEEILPIIIEAANRCSPPLFEDQPNEIKNIWYHLGFGYTANPSLEDSGNSTWYFPPNCEKIRANAPQLCTPDKHCKYIRNPLTYYLRRLYLEGRRNAPKRGNKRGKKELLHQ.

Residues C231, C340, C351, and C357 each contribute to the [4Fe-4S] cluster site.

Belongs to the eukaryotic-type primase large subunit family. As to quaternary structure, heterodimer of a small subunit (PriS) and a large subunit (PriL). Requires [4Fe-4S] cluster as cofactor.

Its function is as follows. Regulatory subunit of DNA primase, an RNA polymerase that catalyzes the synthesis of short RNA molecules used as primers for DNA polymerase during DNA replication. Stabilizes and modulates the activity of the small subunit, increasing the rate of DNA synthesis, and conferring RNA synthesis capability. The DNA polymerase activity may enable DNA primase to also catalyze primer extension after primer synthesis. May also play a role in DNA repair. The polypeptide is DNA primase large subunit PriL (Pyrococcus horikoshii (strain ATCC 700860 / DSM 12428 / JCM 9974 / NBRC 100139 / OT-3)).